The chain runs to 1009 residues: Epididymis-specific alpha-mannosidase (1009 aa).

An N-terminal signal peptide occupies residues 1 to 23 (MGQLCWLPLLAPLLLLRPPGVQS). 3 residues coordinate Zn(2+): His-36, Asp-38, and Asp-151. Asp-151 acts as the Nucleophile in catalysis. Residues Asn-226, Asn-249, Asn-294, and Asn-336 are each glycosylated (N-linked (GlcNAc...) asparagine). His-420 is a binding site for Zn(2+). N-linked (GlcNAc...) asparagine glycosylation is found at Asn-516, Asn-608, Asn-670, Asn-675, Asn-748, Asn-808, Asn-812, and Asn-890. A disordered region spans residues 972–991 (GPGRHRGDTTSPSRPPGGPI).

Belongs to the glycosyl hydrolase 38 family. Zn(2+) serves as cofactor.

It is found in the secreted. The catalysed reaction is Hydrolysis of terminal, non-reducing alpha-D-mannose residues in alpha-D-mannosides.. The polypeptide is Epididymis-specific alpha-mannosidase (MAN2B2) (Homo sapiens (Human)).